The primary structure comprises 393 residues: NAD(P)H-quinone oxidoreductase subunit H, chloroplastic (393 aa).

This sequence belongs to the complex I 49 kDa subunit family. NDH is composed of at least 16 different subunits, 5 of which are encoded in the nucleus.

The protein localises to the plastid. The protein resides in the chloroplast thylakoid membrane. It carries out the reaction a plastoquinone + NADH + (n+1) H(+)(in) = a plastoquinol + NAD(+) + n H(+)(out). It catalyses the reaction a plastoquinone + NADPH + (n+1) H(+)(in) = a plastoquinol + NADP(+) + n H(+)(out). NDH shuttles electrons from NAD(P)H:plastoquinone, via FMN and iron-sulfur (Fe-S) centers, to quinones in the photosynthetic chain and possibly in a chloroplast respiratory chain. The immediate electron acceptor for the enzyme in this species is believed to be plastoquinone. Couples the redox reaction to proton translocation, and thus conserves the redox energy in a proton gradient. The polypeptide is NAD(P)H-quinone oxidoreductase subunit H, chloroplastic (Lactuca sativa (Garden lettuce)).